The sequence spans 1010 residues: Sodium/potassium-transporting ATPase subunit alpha-3 (1010 aa).

A disordered region spans residues 1 to 21 (MGDKGEKESPKKGKGKRDLDD). The Cytoplasmic segment spans residues 1 to 74 (MGDKGEKESP…NALTPPPTTP (74 aa)). The segment at 69 to 71 (PPP) is interaction with phosphoinositide-3 kinase. Residues 75–95 (EWVKFCRQLFGGFSILLWIGA) form a helical membrane-spanning segment. The Extracellular segment spans residues 96–118 (ILCFLAYGIQAGTEDEPSNDNLY). Residues 119–139 (LGIVLAAVVIITGCFSYYQEA) form a helical membrane-spanning segment. Residues 140–275 (KSSKIMESFK…VGKTPIAVEI (136 aa)) lie on the Cytoplasmic side of the membrane. Residues 276-295 (EHFIQLITGVAVFLGISFFV) traverse the membrane as a helical segment. At 296-307 (LSLILGYTWLEA) the chain is on the extracellular side. The chain crosses the membrane as a helical span at residues 308 to 325 (VIFLIGIIVANVPEGLLA). The Cytoplasmic segment spans residues 326-759 (TVTVCLTLTA…EEGRLIFDNL (434 aa)). The active-site 4-aspartylphosphate intermediate is the aspartate 363. Residues aspartate 704 and aspartate 708 each coordinate Mg(2+). The helical transmembrane segment at 760–779 (KKSIAYTLTSNIPEITPFLL) threads the bilayer. Topologically, residues 780–789 (FIMANIPLPL) are extracellular. The helical transmembrane segment at 790-810 (GTITILCIDLGTDMVPAISLA) threads the bilayer. Topologically, residues 811 to 830 (YEAAESDIMKRQPRNPRSDK) are cytoplasmic. The chain crosses the membrane as a helical span at residues 831-853 (LVNERLISMAYGQIGMIQALGGF). Residues 854–905 (FSYFVILAENGFLPSCLVGIRLSWDDRTINDLEDSYGQQWTYEQRKVVEFTC) lie on the Extracellular side of the membrane. A helical transmembrane segment spans residues 906-925 (HTAFFVSIVVVQWADLIICK). The Cytoplasmic segment spans residues 926–938 (TRRNSVFQQGMKN). Serine 930 is subject to Phosphoserine; by PKA. A helical transmembrane segment spans residues 939 to 957 (KILIFGLFEETALAAFLSY). The Extracellular portion of the chain corresponds to 958 to 972 (CPGMDVALRMYPLKP). Residues 973–993 (SWWFCAFPYSFLIFVYDEIRK) form a helical membrane-spanning segment. Over 994-1010 (LILRRNPGGWVEKETYY) the chain is Cytoplasmic.

It belongs to the cation transport ATPase (P-type) (TC 3.A.3) family. Type IIC subfamily. In terms of assembly, the sodium/potassium-transporting ATPase is composed of a catalytic alpha subunit, an auxiliary non-catalytic beta subunit and an additional regulatory subunit.

It is found in the cell membrane. It carries out the reaction K(+)(out) + Na(+)(in) + ATP + H2O = K(+)(in) + Na(+)(out) + ADP + phosphate + H(+). This is the catalytic component of the active enzyme, which catalyzes the hydrolysis of ATP coupled with the exchange of sodium and potassium ions across the plasma membrane. This action creates the electrochemical gradient of sodium and potassium ions, providing the energy for active transport of various nutrients. This chain is Sodium/potassium-transporting ATPase subunit alpha-3 (ATP1A3), found in Gallus gallus (Chicken).